The sequence spans 555 residues: Glutamine--tRNA ligase (555 aa).

A 'HIGH' region motif is present at residues 35–45 (PEPNGYLHIGH). Residues 36 to 38 (EPN) and 42 to 48 (HIGHAKS) each bind ATP. Positions 68 and 213 each coordinate L-glutamine. ATP contacts are provided by residues Thr232 and 262–263 (RL). The 'KMSKS' region motif lies at 269 to 273 (ITSKR).

This sequence belongs to the class-I aminoacyl-tRNA synthetase family. In terms of assembly, monomer.

The protein localises to the cytoplasm. It carries out the reaction tRNA(Gln) + L-glutamine + ATP = L-glutaminyl-tRNA(Gln) + AMP + diphosphate. This is Glutamine--tRNA ligase from Stutzerimonas stutzeri (strain A1501) (Pseudomonas stutzeri).